The primary structure comprises 234 residues: Accessory gland protein Acp29AB (234 aa).

An N-terminal signal peptide occupies residues 1-21 (MYATNLLYLLALWNLWLVSGG). N-linked (GlcNAc...) asparagine glycosylation is found at Asn29, Asn61, Asn127, and Asn164. The region spanning 137–234 (VTCREMNGHL…SFVCQANQWA (98 aa)) is the C-type lectin domain. 2 disulfide bridges follow: Cys139-Cys228 and Cys207-Cys220.

The protein localises to the secreted. Its function is as follows. Responsible for physiological and behavioral changes in mated female flies. This is Accessory gland protein Acp29AB (Acp29AB) from Drosophila simulans (Fruit fly).